We begin with the raw amino-acid sequence, 998 residues long: Probable protein kinase DDB_G0277539 (998 aa).

6 disordered regions span residues 1-34 (MDFP…DFDQ), 65-207 (CEDQ…TNEF), 265-284 (INNN…FSSS), 316-367 (SNGS…NYSS), 380-420 (ERTN…PNSI), and 435-489 (RLQS…NNNN). The span at 23–32 (YDDDDDDDDF) shows a compositional bias: acidic residues. Residues 70–139 (QQQQQQSSSP…NNNNNNNNNN (70 aa)) are compositionally biased toward low complexity. Positions 140–150 (SHHHHLRKGRR) are enriched in basic residues. Over residues 166-177 (ASLSSTKTNMFP) the composition is skewed to polar residues. Low complexity-rich tracts occupy residues 184–203 (SSPS…QSQQ) and 265–274 (INNNYNNNNN). The segment covering 316–328 (SNGSYNKGNTFPS) has biased composition (polar residues). The span at 330 to 340 (EVKRVRPDQRA) shows a compositional bias: basic and acidic residues. 2 stretches are compositionally biased toward low complexity: residues 393–415 (NVNN…NNNN) and 450–489 (NNNN…NNNN). The 342-residue stretch at 508 to 849 (FQELDLIGEG…AEQLLEHPLI (342 aa)) folds into the Protein kinase domain. ATP is bound by residues 514–522 (IGEGSFGHV) and lysine 537. Aspartate 631 (proton acceptor) is an active-site residue. Mg(2+)-binding residues include asparagine 636 and glutamate 677.

This sequence belongs to the protein kinase superfamily. Ser/Thr protein kinase family. WEE1 subfamily.

The enzyme catalyses L-seryl-[protein] + ATP = O-phospho-L-seryl-[protein] + ADP + H(+). It catalyses the reaction L-threonyl-[protein] + ATP = O-phospho-L-threonyl-[protein] + ADP + H(+). The polypeptide is Probable protein kinase DDB_G0277539 (Dictyostelium discoideum (Social amoeba)).